A 508-amino-acid polypeptide reads, in one-letter code: ATP synthase subunit alpha, mitochondrial (508 aa).

171–178 (GDRQTGKT) contacts ATP.

This sequence belongs to the ATPase alpha/beta chains family. As to quaternary structure, F-type ATPases have 2 components, CF(1) - the catalytic core - and CF(0) - the membrane proton channel. CF(1) has five subunits: alpha(3), beta(3), gamma(1), delta(1), epsilon(1). CF(0) has three main subunits: a, b and c.

It is found in the mitochondrion. It localises to the mitochondrion inner membrane. In terms of biological role, mitochondrial membrane ATP synthase (F(1)F(0) ATP synthase or Complex V) produces ATP from ADP in the presence of a proton gradient across the membrane which is generated by electron transport complexes of the respiratory chain. F-type ATPases consist of two structural domains, F(1) - containing the extramembraneous catalytic core, and F(0) - containing the membrane proton channel, linked together by a central stalk and a peripheral stalk. During catalysis, ATP synthesis in the catalytic domain of F(1) is coupled via a rotary mechanism of the central stalk subunits to proton translocation. Subunits alpha and beta form the catalytic core in F(1). Rotation of the central stalk against the surrounding alpha(3)beta(3) subunits leads to hydrolysis of ATP in three separate catalytic sites on the beta subunits. Subunit alpha does not bear the catalytic high-affinity ATP-binding sites. The polypeptide is ATP synthase subunit alpha, mitochondrial (ATPA) (Zea mays (Maize)).